Here is a 96-residue protein sequence, read N- to C-terminus: Bublin coiled-coil protein (96 aa).

Positions 39–79 (NSCLDDIEDRNDALNGKLHELLESNRQARKDFRQQLNDEEA) form a coiled coil. A disordered region spans residues 63–96 (NRQARKDFRQQLNDEEASPPPAEDPASRDTQTED). The span at 87-96 (PASRDTQTED) shows a compositional bias: basic and acidic residues.

This sequence belongs to the UPF0184 (EST00098) family.

It is found in the cell junction. Its subcellular location is the cytoplasm. It localises to the cytoskeleton. Its function is as follows. Essential for intermediate filament organization in intestinal cells, interacts with intermediate filament and regulates intestinal lumen morphology. The sequence is that of Bublin coiled-coil protein (bbln) from Ctenopharyngodon idella (Grass carp).